We begin with the raw amino-acid sequence, 397 residues long: MNIHEYQAKALLRSYGAPVSDGRVVLKADEAKSAAGELGGPLWVVKAQIHAGGRGKGKFKEPEAGEKGGVRLAKSVGEAAELAKQMLGRTLVTHQTGPSGKQVNRIYIEEGSDIARELYLALLVDRGTSRISFVVSTEGGMDIEEVAASTPEKIVSFSVDPASGLSDFHGRRVAFALGLEGAQVKQCVQLVKNLYRAFVEKDMEMLEINPLIVMTDGNLKVLDAKVGFDNNALYRQPDIMALRDETEEDPKELAASKFDLNYIALDGEIGCMVNGAGLAMATMDIIKLYGAEPANFLDVGGGATKEKVTEAFKIITSDPNVKGILVNIFGGIMRCDIIAEGIIAAVKEVGLQVPLVVRLEGTNVEKGKEIIANSGLNVIAGDNLSDAAQKIVKAVKG.

The 246-residue stretch at 9–254 folds into the ATP-grasp domain; sequence KALLRSYGAP…ETEEDPKELA (246 aa). ATP is bound by residues Lys46, 53–55, Glu109, Ser112, and Glu117; that span reads GRG. Mg(2+) is bound by residues Asn209 and Asp223. Substrate is bound by residues Asn274 and 331–333; that span reads GIM.

It belongs to the succinate/malate CoA ligase beta subunit family. In terms of assembly, heterotetramer of two alpha and two beta subunits. It depends on Mg(2+) as a cofactor.

It carries out the reaction succinate + ATP + CoA = succinyl-CoA + ADP + phosphate. It catalyses the reaction GTP + succinate + CoA = succinyl-CoA + GDP + phosphate. It participates in carbohydrate metabolism; tricarboxylic acid cycle; succinate from succinyl-CoA (ligase route): step 1/1. In terms of biological role, succinyl-CoA synthetase functions in the citric acid cycle (TCA), coupling the hydrolysis of succinyl-CoA to the synthesis of either ATP or GTP and thus represents the only step of substrate-level phosphorylation in the TCA. The beta subunit provides nucleotide specificity of the enzyme and binds the substrate succinate, while the binding sites for coenzyme A and phosphate are found in the alpha subunit. This is Succinate--CoA ligase [ADP-forming] subunit beta from Cereibacter sphaeroides (strain ATCC 17025 / ATH 2.4.3) (Rhodobacter sphaeroides).